Here is a 70-residue protein sequence, read N- to C-terminus: Small ribosomal subunit protein bS18c (70 aa).

It belongs to the bacterial ribosomal protein bS18 family. In terms of assembly, part of the 30S ribosomal subunit.

Its subcellular location is the plastid. It is found in the chloroplast. The protein is Small ribosomal subunit protein bS18c of Gracilaria tenuistipitata var. liui (Red alga).